The following is a 115-amino-acid chain: Nitrogenase-stabilizing/protective protein NifW (115 aa).

Belongs to the NifW family. As to quaternary structure, homotrimer; associates with NifD.

Its function is as follows. May protect the nitrogenase Fe-Mo protein from oxidative damage. The chain is Nitrogenase-stabilizing/protective protein NifW from Rhodopseudomonas palustris (strain BisB18).